Here is a 274-residue protein sequence, read N- to C-terminus: Large ribosomal subunit protein uL2 (274 aa).

A disordered region spans residues 223–274 (VAMNPVDHPHGGGEGRTSGGRHPVTPWGVPTKGYKTRSNKRTDKYIVRRRNK).

Belongs to the universal ribosomal protein uL2 family. In terms of assembly, part of the 50S ribosomal subunit. Forms a bridge to the 30S subunit in the 70S ribosome.

One of the primary rRNA binding proteins. Required for association of the 30S and 50S subunits to form the 70S ribosome, for tRNA binding and peptide bond formation. It has been suggested to have peptidyltransferase activity; this is somewhat controversial. Makes several contacts with the 16S rRNA in the 70S ribosome. The sequence is that of Large ribosomal subunit protein uL2 from Shewanella sp. (strain ANA-3).